We begin with the raw amino-acid sequence, 322 residues long: Transcription factor IIIA (322 aa).

9 C2H2-type zinc fingers span residues Phe-12–His-36, Phe-42–His-64, Tyr-70–His-95, Tyr-102–His-126, Phe-132–His-156, Tyr-159–His-184, Leu-188–His-211, Phe-218–His-243, and Phe-249–His-273. Residues Val-272 to Pro-322 form a disordered region. The span at Lys-278–Leu-292 shows a compositional bias: basic residues. A compositionally biased stretch (polar residues) spans Ser-312–Pro-322.

The protein resides in the nucleus. In terms of biological role, involved in ribosomal large subunit biogenesis. Interacts with the internal control region (ICR) of approximately 50 bases within the 5S RNA genes, is required for correct transcription of these genes by RNA polymerase III. Also binds the transcribed 5S RNA's. The sequence is that of Transcription factor IIIA (gtf3a) from Ictalurus punctatus (Channel catfish).